Here is a 79-residue protein sequence, read N- to C-terminus: Cell division protein ZapB (79 aa).

The stretch at 4-78 (EVFEKLEAKV…LRALLGKMEE (75 aa)) forms a coiled coil.

This sequence belongs to the ZapB family. In terms of assembly, homodimer. The ends of the coiled-coil dimer bind to each other, forming polymers. Interacts with FtsZ.

Its subcellular location is the cytoplasm. Non-essential, abundant cell division factor that is required for proper Z-ring formation. It is recruited early to the divisome by direct interaction with FtsZ, stimulating Z-ring assembly and thereby promoting cell division earlier in the cell cycle. Its recruitment to the Z-ring requires functional FtsA or ZipA. The protein is Cell division protein ZapB of Pectobacterium carotovorum subsp. carotovorum (strain PC1).